We begin with the raw amino-acid sequence, 504 residues long: MLSTTQSVTEPTEVTSKKVEDIEKENDEETPYSIFTSYDRLVLIVILSLIGFWSTISSPIYFPALPTLTSYFHTSSSIMNISVVAYLIFQGIAPTISSNLADTFGRRPVILASIIVFCASCVAISQTNVYWLLAVLRCIQAAGIAAVISISSGVAGDVCTRANRGSMVGAVAGLQLVGNGIGGLVGAALISSFNSWRSIFIFLTIGGGVTFILAIFILPETSRKLVGNGSVVPKNILNKSPYIYLPHFKKRMNNDITTIVPATRFDLLGPLKIFFQKNVFCTLLPVGIHFAAWTMVLTSLSTELESRYHYSVMHVGLIYLPQGIACIAGSLVVGKSLDWYYRYRKTIYDQEVECLPLDERPQFNIVATRLTLSVVPALLMIIGLVIFGWCIQYKRHIISIIISTILVSFSASVFIAICTTMLVDLYPNNGSGSTSCLNLMRCWLAALGAGVLDSMINAMNVGGTYTVVAGFCILFDLALIYVLHNAKKKFSNSGPTTTKSPPKQ.

Polar residues predominate over residues 1–14; it reads MLSTTQSVTEPTEV. The tract at residues 1–23 is disordered; it reads MLSTTQSVTEPTEVTSKKVEDIE. The Cytoplasmic portion of the chain corresponds to 1 to 41; the sequence is MLSTTQSVTEPTEVTSKKVEDIEKENDEETPYSIFTSYDRL. The chain crosses the membrane as a helical span at residues 42-62; the sequence is VLIVILSLIGFWSTISSPIYF. Residues 63 to 75 lie on the Extracellular side of the membrane; the sequence is PALPTLTSYFHTS. The helical transmembrane segment at 76 to 96 threads the bilayer; sequence SSIMNISVVAYLIFQGIAPTI. Residues 97 to 106 are Cytoplasmic-facing; the sequence is SSNLADTFGR. The helical transmembrane segment at 107–129 threads the bilayer; sequence RPVILASIIVFCASCVAISQTNV. At 130–132 the chain is on the extracellular side; sequence YWL. Residues 133–155 form a helical membrane-spanning segment; the sequence is LAVLRCIQAAGIAAVISISSGVA. The Cytoplasmic segment spans residues 156-169; that stretch reads GDVCTRANRGSMVG. Residues 170 to 190 traverse the membrane as a helical segment; that stretch reads AVAGLQLVGNGIGGLVGAALI. Over 191–198 the chain is Extracellular; it reads SSFNSWRS. A helical transmembrane segment spans residues 199-219; it reads IFIFLTIGGGVTFILAIFILP. The Cytoplasmic segment spans residues 220 to 278; it reads ETSRKLVGNGSVVPKNILNKSPYIYLPHFKKRMNNDITTIVPATRFDLLGPLKIFFQKN. Residues 279 to 299 form a helical membrane-spanning segment; sequence VFCTLLPVGIHFAAWTMVLTS. Residues 300–311 are Extracellular-facing; sequence LSTELESRYHYS. Residues 312–332 traverse the membrane as a helical segment; sequence VMHVGLIYLPQGIACIAGSLV. At 333-370 the chain is on the cytoplasmic side; it reads VGKSLDWYYRYRKTIYDQEVECLPLDERPQFNIVATRL. A helical membrane pass occupies residues 371–391; sequence TLSVVPALLMIIGLVIFGWCI. The Extracellular portion of the chain corresponds to 392 to 396; the sequence is QYKRH. A helical membrane pass occupies residues 397–417; sequence IISIIISTILVSFSASVFIAI. The Cytoplasmic segment spans residues 418–438; that stretch reads CTTMLVDLYPNNGSGSTSCLN. Residues 439 to 456 form a helical membrane-spanning segment; it reads LMRCWLAALGAGVLDSMI. At 457–460 the chain is on the extracellular side; that stretch reads NAMN. Residues 461-483 form a helical membrane-spanning segment; sequence VGGTYTVVAGFCILFDLALIYVL. Topologically, residues 484-504 are cytoplasmic; the sequence is HNAKKKFSNSGPTTTKSPPKQ.

It belongs to the major facilitator superfamily. CAR1 family.

The protein localises to the cell membrane. Functionally, MFS antiporter that does not display functional linkage as drug transporter and performs functions that significantly affect biofilm development and virulence. No substrate for transport has been identified yet, but plays an important role in the growth in the host. This is MFS antiporter QDR2 (QDR2) from Candida albicans (strain SC5314 / ATCC MYA-2876) (Yeast).